The chain runs to 372 residues: Glutamate 5-kinase (372 aa).

Lys6 contributes to the ATP binding site. Substrate is bound by residues Ser46, Asp133, and Asn145. ATP-binding positions include 165 to 166 (TD) and 207 to 213 (TGGMYTK). The PUA domain occupies 272-350 (SGRLFIDEGA…HEIEKILGYK (79 aa)).

It belongs to the glutamate 5-kinase family.

It is found in the cytoplasm. It carries out the reaction L-glutamate + ATP = L-glutamyl 5-phosphate + ADP. It functions in the pathway amino-acid biosynthesis; L-proline biosynthesis; L-glutamate 5-semialdehyde from L-glutamate: step 1/2. In terms of biological role, catalyzes the transfer of a phosphate group to glutamate to form L-glutamate 5-phosphate. The sequence is that of Glutamate 5-kinase from Thermoanaerobacter pseudethanolicus (strain ATCC 33223 / 39E) (Clostridium thermohydrosulfuricum).